A 171-amino-acid polypeptide reads, in one-letter code: 3-hydroxydecanoyl-[acyl-carrier-protein] dehydratase (171 aa).

Residue His-70 is part of the active site.

The protein belongs to the thioester dehydratase family. FabA subfamily. In terms of assembly, homodimer.

Its subcellular location is the cytoplasm. It catalyses the reaction a (3R)-hydroxyacyl-[ACP] = a (2E)-enoyl-[ACP] + H2O. The enzyme catalyses (3R)-hydroxydecanoyl-[ACP] = (2E)-decenoyl-[ACP] + H2O. The catalysed reaction is (2E)-decenoyl-[ACP] = (3Z)-decenoyl-[ACP]. It functions in the pathway lipid metabolism; fatty acid biosynthesis. In terms of biological role, necessary for the introduction of cis unsaturation into fatty acids. Catalyzes the dehydration of (3R)-3-hydroxydecanoyl-ACP to E-(2)-decenoyl-ACP and then its isomerization to Z-(3)-decenoyl-ACP. Can catalyze the dehydratase reaction for beta-hydroxyacyl-ACPs with saturated chain lengths up to 16:0, being most active on intermediate chain length. The chain is 3-hydroxydecanoyl-[acyl-carrier-protein] dehydratase from Shewanella sp. (strain ANA-3).